The sequence spans 334 residues: Small ribosomal subunit protein uS2 (334 aa).

This sequence belongs to the universal ribosomal protein uS2 family.

The chain is Small ribosomal subunit protein uS2 from Rhodopseudomonas palustris (strain BisB18).